Here is a 425-residue protein sequence, read N- to C-terminus: Glutamate-1-semialdehyde 2,1-aminomutase (425 aa).

Residue Lys-265 is modified to N6-(pyridoxal phosphate)lysine.

Belongs to the class-III pyridoxal-phosphate-dependent aminotransferase family. HemL subfamily. As to quaternary structure, homodimer. Requires pyridoxal 5'-phosphate as cofactor.

The protein resides in the cytoplasm. The catalysed reaction is (S)-4-amino-5-oxopentanoate = 5-aminolevulinate. Its pathway is porphyrin-containing compound metabolism; protoporphyrin-IX biosynthesis; 5-aminolevulinate from L-glutamyl-tRNA(Glu): step 2/2. In Desulfatibacillum aliphaticivorans, this protein is Glutamate-1-semialdehyde 2,1-aminomutase.